The following is a 251-amino-acid chain: Small ribosomal subunit protein uS2 (251 aa).

An N-acetylserine modification is found at Ser-2. The disordered stretch occupies residues 209-251; the sequence is EIEQQTAEEAAQEAGEEEAKEEVTEEQTEAAEWAQENADNVEW. Positions 218–237 are enriched in acidic residues; that stretch reads AAQEAGEEEAKEEVTEEQTE. Low complexity predominate over residues 238 to 251; the sequence is AAEWAQENADNVEW.

The protein belongs to the universal ribosomal protein uS2 family. In terms of assembly, component of the small ribosomal subunit. Mature ribosomes consist of a small (40S) and a large (60S) subunit. The 40S subunit contains about 33 different proteins and 1 molecule of RNA (18S). The 60S subunit contains about 49 different proteins and 3 molecules of RNA (25S, 5.8S and 5S). Interacts with RPS21.

Its subcellular location is the cytoplasm. In terms of biological role, required for the assembly and/or stability of the 40S ribosomal subunit. Required for the processing of the 20S rRNA-precursor to mature 18S rRNA in a late step of the maturation of 40S ribosomal subunits. The sequence is that of Small ribosomal subunit protein uS2 from Candida glabrata (strain ATCC 2001 / BCRC 20586 / JCM 3761 / NBRC 0622 / NRRL Y-65 / CBS 138) (Yeast).